Consider the following 837-residue polypeptide: Striatin-interacting protein 1 (837 aa).

An N-acetylmethionine modification is found at M1. Disordered regions lie at residues 1–67 (MEPA…ESPD) and 333–423 (AASP…KGLP). A compositionally biased stretch (pro residues) spans 18 to 35 (PQPPPPPPPAAAQPPPGA). Positions 36–46 (PRAAAGLLPGG) are enriched in low complexity. Residues 47 to 60 (KAREFNRNQRKDSE) show a composition bias toward basic and acidic residues. 3 positions are modified to phosphoserine: S59, S335, and S339. A compositionally biased stretch (basic and acidic residues) spans 356-377 (KALIKQDNLDAFNERDPYKADD). A compositionally biased stretch (acidic residues) spans 378–391 (SREEEEENDDDNSL). S788 carries the post-translational modification Phosphoserine. The segment at 796 to 837 (DNCLQSVLGQRVDLPEDFQMNYDLWLEREVFSKPISWEELLQ) is required for STRIPAK core complex formation.

The protein belongs to the STRIP family. As to quaternary structure, part of the core of STRIPAK complexes composed of PP2A catalytic and scaffolding subunits, the striatins (PP2A regulatory subunits), the striatin-associated proteins MOB4, STRIP1 and STRIP2, PDCD10 and members of the STE20 kinases, such as STK24 and STK26. The STRIPAK complex can be extended by adapter proteins such as SLMAP:SIKE1, CTTNBP2 or CTTNBP2NL. Interacts with CDC42BPB. Interacts with CTTNBP2NL.

The protein resides in the cytoplasm. Plays a role in the regulation of cell morphology and cytoskeletal organization. Required in the cortical actin filament dynamics and cell shape. Part of the striatin-interacting phosphatase and kinase (STRIPAK) complexes. STRIPAK complexes have critical roles in protein (de)phosphorylation and are regulators of multiple signaling pathways including Hippo, MAPK, nuclear receptor and cytoskeleton remodeling. Different types of STRIPAK complexes are involved in a variety of biological processes such as cell growth, differentiation, apoptosis, metabolism and immune regulation. The polypeptide is Striatin-interacting protein 1 (Homo sapiens (Human)).